The chain runs to 250 residues: MLASTRHIARGDTGNVSVRIRRVTTTRAGGVSAPPFDTFNLGDHVGDDPAAVAANRARLAAAIGLPGNRVVWMNQVHGDRVELVDQPRNTALDDTDGLVTATPRLALAVVTADCVPVLMADARAGIAAAVHAGRAGAQRGVVVRALEVMLSLGAQVRDISALLGPAVSGRNYEVPAAMADEVEAALPGSRTTTAAGTPGVDLRAGIACQLRDLGVESIDVDPRCTVADPTLFSHRRDAPTGRFASLVWME.

Zn(2+) is bound by residues histidine 77, cysteine 114, and histidine 131.

It belongs to the purine nucleoside phosphorylase YfiH/LACC1 family. As to quaternary structure, homodimer. Requires Cu(2+) as cofactor. Zn(2+) is required as a cofactor.

The enzyme catalyses adenosine + phosphate = alpha-D-ribose 1-phosphate + adenine. It carries out the reaction S-methyl-5'-thioadenosine + phosphate = 5-(methylsulfanyl)-alpha-D-ribose 1-phosphate + adenine. The catalysed reaction is inosine + phosphate = alpha-D-ribose 1-phosphate + hypoxanthine. It catalyses the reaction adenosine + H2O + H(+) = inosine + NH4(+). Functionally, purine nucleoside enzyme that catalyzes the phosphorolysis of adenosine and inosine nucleosides, yielding D-ribose 1-phosphate and the respective free bases, adenine and hypoxanthine. Also catalyzes the phosphorolysis of S-methyl-5'-thioadenosine into adenine and S-methyl-5-thio-alpha-D-ribose 1-phosphate. Also has adenosine deaminase activity. The chain is Purine nucleoside phosphorylase BQ2027_MB2173C from Mycobacterium bovis (strain ATCC BAA-935 / AF2122/97).